Here is a 319-residue protein sequence, read N- to C-terminus: Super small secreted glycoprotein (319 aa).

The first 32 residues, 1–32, serve as a signal peptide directing secretion; it reads MGGLSLLQLPRDKFRKSSFFVWVIILFQKAFS. An N-linked (GlcNAc...) asparagine; by host glycan is attached at Asn40. Disulfide bonds link Cys108/Cys135 and Cys121/Cys147. N-linked (GlcNAc...) asparagine; by host glycans are attached at residues Asn204, Asn208, Asn238, Asn257, and Asn268.

It belongs to the filoviruses glycoprotein family.

Its subcellular location is the secreted. This chain is Super small secreted glycoprotein (GP), found in Sudan ebolavirus (strain Human/Uganda/Gulu/2000) (SEBOV).